Reading from the N-terminus, the 123-residue chain is Large ribosomal subunit protein uL29 (123 aa).

The protein belongs to the universal ribosomal protein uL29 family.

The protein is Large ribosomal subunit protein uL29 (RPL35) of Theileria lestoquardi.